The chain runs to 142 residues: Hemoglobin subunit alpha (142 aa).

The Globin domain occupies 2–142; it reads VLSAADKNNV…VSTVLTSKYR (141 aa). Serine 4 carries the post-translational modification Phosphoserine. Residues lysine 8 and lysine 12 each carry the N6-succinyllysine modification. Lysine 17 is subject to N6-acetyllysine; alternate. Lysine 17 bears the N6-succinyllysine; alternate mark. Tyrosine 25 carries the post-translational modification Phosphotyrosine. At serine 36 the chain carries Phosphoserine. Lysine 41 carries the post-translational modification N6-succinyllysine. A Phosphoserine modification is found at serine 50. Histidine 59 provides a ligand contact to O2. Histidine 88 contributes to the heme b binding site. At threonine 109 the chain carries Phosphothreonine. Serine 125 and serine 132 each carry phosphoserine. Threonine 135 and threonine 138 each carry phosphothreonine. Serine 139 is modified (phosphoserine).

It belongs to the globin family. Heterotetramer of two alpha chains and two beta chains. Red blood cells.

In terms of biological role, involved in oxygen transport from the lung to the various peripheral tissues. Functionally, hemopressin acts as an antagonist peptide of the cannabinoid receptor CNR1. Hemopressin-binding efficiently blocks cannabinoid receptor CNR1 and subsequent signaling. This Cavia porcellus (Guinea pig) protein is Hemoglobin subunit alpha (HBA).